Reading from the N-terminus, the 403-residue chain is L-cysteine:1D-myo-inositol 2-amino-2-deoxy-alpha-D-glucopyranoside ligase (403 aa).

Cysteine 43 provides a ligand contact to Zn(2+). L-cysteinyl-5'-AMP contacts are provided by residues 43 to 46, threonine 58, and 81 to 83; these read CGIT and NTT. The 'HIGH' region motif lies at 45-55; it reads ITPYDATHLGH. A 'ERGGDP' region motif is present at residues 183–188; the sequence is ERGGDP. Tryptophan 223 is a binding site for L-cysteinyl-5'-AMP. Cysteine 227 contacts Zn(2+). Position 245–247 (245–247) interacts with L-cysteinyl-5'-AMP; that stretch reads GSD. Zn(2+) is bound at residue histidine 252. Residue valine 279 coordinates L-cysteinyl-5'-AMP. The short motif at 285 to 289 is the 'KMSKS' region element; it reads KMSKS.

The protein belongs to the class-I aminoacyl-tRNA synthetase family. MshC subfamily. Monomer. Requires Zn(2+) as cofactor.

The catalysed reaction is 1D-myo-inositol 2-amino-2-deoxy-alpha-D-glucopyranoside + L-cysteine + ATP = 1D-myo-inositol 2-(L-cysteinylamino)-2-deoxy-alpha-D-glucopyranoside + AMP + diphosphate + H(+). Catalyzes the ATP-dependent condensation of GlcN-Ins and L-cysteine to form L-Cys-GlcN-Ins. The sequence is that of L-cysteine:1D-myo-inositol 2-amino-2-deoxy-alpha-D-glucopyranoside ligase from Thermobispora bispora (strain ATCC 19993 / DSM 43833 / CBS 139.67 / JCM 10125 / KCTC 9307 / NBRC 14880 / R51).